Here is a 226-residue protein sequence, read N- to C-terminus: PKHD-type hydroxylase PiuC (226 aa).

Positions 78-178 (KVFPPLFNCY…RYASFFWTQS (101 aa)) constitute a Fe2OG dioxygenase domain. Positions 96, 98, and 159 each coordinate Fe cation. Position 169 (Arg169) interacts with 2-oxoglutarate.

Fe(2+) is required as a cofactor. L-ascorbate serves as cofactor.

In Pseudomonas aeruginosa (strain ATCC 15692 / DSM 22644 / CIP 104116 / JCM 14847 / LMG 12228 / 1C / PRS 101 / PAO1), this protein is PKHD-type hydroxylase PiuC (piuC).